Consider the following 418-residue polypeptide: Gamma-glutamyl phosphate reductase (418 aa).

This sequence belongs to the gamma-glutamyl phosphate reductase family.

The protein localises to the cytoplasm. It catalyses the reaction L-glutamate 5-semialdehyde + phosphate + NADP(+) = L-glutamyl 5-phosphate + NADPH + H(+). The protein operates within amino-acid biosynthesis; L-proline biosynthesis; L-glutamate 5-semialdehyde from L-glutamate: step 2/2. In terms of biological role, catalyzes the NADPH-dependent reduction of L-glutamate 5-phosphate into L-glutamate 5-semialdehyde and phosphate. The product spontaneously undergoes cyclization to form 1-pyrroline-5-carboxylate. This is Gamma-glutamyl phosphate reductase from Agathobacter rectalis (strain ATCC 33656 / DSM 3377 / JCM 17463 / KCTC 5835 / VPI 0990) (Eubacterium rectale).